The primary structure comprises 550 residues: MSIDLNWETVTGGPDGQELADSIRDFIHTKFQSVPLPRFIKSVTVHDFQFGTIPPEIELKDITDPLPDFYEENLDSDLASESGSEEDEEEIADDRRRRQTEAVLTGGAGAHNPSALPPHLSLGGLGGLGGLGAGGSRNGGDIGSPFLRVNTPGIPGGTSNLHYFHSQFATGLSGTQTPLAAVAGAHHLNSAAWLEGHGHSSSAPNLHQYGAPDFGGVDGQSTAPVPNQDLRRPLLQQPPSTHRRNPSQSSIDLNPSLGLTPPSPTVLSVPPFPPSSTGGPSPPPGLAKPHHPHHPHHHHAHHAHPLLREKHSVSTLAASAGPPSRPPTRDKTTPSHHPDPEDVHAPNTTTTNKQRSTSPATSSPLATSAQEQAEEEEEEEKRKLREKKVDDMQAVFRIRYAGDIKLLLTADILLDYPMPSFVGIPVRLSITGLTFDGVGVLAKIRKRVHFCFLSPEDAVAAVGQGENEVDGGEGDKQTGFKSPPGGGNGLGATKLGGLLQEIRVESEIGQRESGKQSLKNVGKVERFVLEQVRRIFEEEFVYPSYWTFLV.

In terms of domain architecture, SMP-LTD spans 1-550 (MSIDLNWETV…VYPSYWTFLV (550 aa)). 3 disordered regions span residues 76–97 (SDLA…DRRR), 196–386 (GHGH…KLRE), and 466–489 (ENEV…GGNG). A compositionally biased stretch (acidic residues) spans 83-92 (GSEEDEEEIA). The segment covering 270–286 (PPFPPSSTGGPSPPPGL) has biased composition (pro residues). The segment covering 288 to 305 (KPHHPHHPHHHHAHHAHP) has biased composition (basic residues). A compositionally biased stretch (basic and acidic residues) spans 327-344 (PTRDKTTPSHHPDPEDVH). Polar residues predominate over residues 346 to 355 (PNTTTTNKQR). Positions 356 to 371 (STSPATSSPLATSAQE) are enriched in low complexity.

Belongs to the MDM12 family. Component of the ER-mitochondria encounter structure (ERMES) or MDM complex, composed of MMM1, MDM10, MDM12 and MDM34. An MMM1 homodimer associates with one molecule of MDM12 on each side in a pairwise head-to-tail manner, and the SMP-LTD domains of MMM1 and MDM12 generate a continuous hydrophobic tunnel for phospholipid trafficking.

The protein resides in the mitochondrion outer membrane. It is found in the endoplasmic reticulum membrane. In terms of biological role, component of the ERMES/MDM complex, which serves as a molecular tether to connect the endoplasmic reticulum (ER) and mitochondria. Components of this complex are involved in the control of mitochondrial shape and protein biogenesis, and function in nonvesicular lipid trafficking between the ER and mitochondria. MDM12 is required for the interaction of the ER-resident membrane protein MMM1 and the outer mitochondrial membrane-resident beta-barrel protein MDM10. The MDM12-MMM1 subcomplex functions in the major beta-barrel assembly pathway that is responsible for biogenesis of all mitochondrial outer membrane beta-barrel proteins, and acts in a late step after the SAM complex. The MDM10-MDM12-MMM1 subcomplex further acts in the TOM40-specific pathway after the action of the MDM12-MMM1 complex. Essential for establishing and maintaining the structure of mitochondria and maintenance of mtDNA nucleoids. This chain is Mitochondrial distribution and morphology protein 12, found in Podospora anserina (strain S / ATCC MYA-4624 / DSM 980 / FGSC 10383) (Pleurage anserina).